Consider the following 329-residue polypeptide: Mitochondrial substrate carrier family protein Q (329 aa).

Solcar repeat units follow at residues 18–115 (VEAL…LKSI), 125–206 (LGTI…LRAL), and 216–310 (LGGL…VVIH). 6 helical membrane passes run 21-41 (LGHAISGGVAGMAAIALTYPF), 95-115 (LIGIGASSFVYYYWYTLLKSI), 131-151 (LAIAALAGCANVLTTLPIWVV), 175-195 (GFGGLYKGLIPALILVSNPSV), 221-241 (VFILGAIAKLIAGIVTYPYLL), and 298-318 (AFMFLVKDKVVIHAVAILFYL).

It belongs to the mitochondrial carrier (TC 2.A.29) family.

The protein resides in the peroxisome membrane. Its function is as follows. May have transport activity. In Dictyostelium discoideum (Social amoeba), this protein is Mitochondrial substrate carrier family protein Q (mcfQ).